The following is a 136-amino-acid chain: Small ribosomal subunit protein uS11c (136 aa).

This sequence belongs to the universal ribosomal protein uS11 family. In terms of assembly, part of the 30S ribosomal subunit.

It localises to the plastid. The protein localises to the chloroplast. This chain is Small ribosomal subunit protein uS11c, found in Guizotia abyssinica (Niger).